The sequence spans 822 residues: Phenylalanine--tRNA ligase beta subunit (822 aa).

The tRNA-binding domain maps to 44–162; sequence LSKNTNLVVG…DQIALGSNAL (119 aa). The tract at residues 201 to 224 is disordered; sequence QSSNNNQETKSTNYKTKNSEDQTN. A B5 domain is found at 430–513; sequence RTNPTISLNL…RLYGCHKLPP (84 aa). Residues Asp491, Asp497, and Asp501 each contribute to the Mg(2+) site. The FDX-ACB domain maps to 730-822; the sequence is PKFPTVIRDL…LIKHFHIEIR (93 aa).

Belongs to the phenylalanyl-tRNA synthetase beta subunit family. Type 1 subfamily. Tetramer of two alpha and two beta subunits. Mg(2+) serves as cofactor.

The protein resides in the cytoplasm. The enzyme catalyses tRNA(Phe) + L-phenylalanine + ATP = L-phenylalanyl-tRNA(Phe) + AMP + diphosphate + H(+). This Onion yellows phytoplasma (strain OY-M) protein is Phenylalanine--tRNA ligase beta subunit.